We begin with the raw amino-acid sequence, 382 residues long: S-adenosylmethionine synthase (382 aa).

His16 contributes to the ATP binding site. Asp18 is a Mg(2+) binding site. Position 44 (Glu44) interacts with K(+). Residues Glu57 and Gln100 each coordinate L-methionine. Residues 100–110 form a flexible loop region; sequence QSPDIAQGVDN. Residues 165–167, 231–232, Asp240, 246–247, and Lys267 contribute to the ATP site; these read DAK, RF, and RK. An L-methionine-binding site is contributed by Asp240. Residue Lys271 participates in L-methionine binding.

Belongs to the AdoMet synthase family. In terms of assembly, homotetramer; dimer of dimers. Requires Mg(2+) as cofactor. K(+) serves as cofactor.

The protein resides in the cytoplasm. It carries out the reaction L-methionine + ATP + H2O = S-adenosyl-L-methionine + phosphate + diphosphate. It participates in amino-acid biosynthesis; S-adenosyl-L-methionine biosynthesis; S-adenosyl-L-methionine from L-methionine: step 1/1. Functionally, catalyzes the formation of S-adenosylmethionine (AdoMet) from methionine and ATP. The overall synthetic reaction is composed of two sequential steps, AdoMet formation and the subsequent tripolyphosphate hydrolysis which occurs prior to release of AdoMet from the enzyme. This Legionella pneumophila (strain Paris) protein is S-adenosylmethionine synthase.